A 333-amino-acid polypeptide reads, in one-letter code: Ribosomal RNA small subunit methyltransferase H (333 aa).

S-adenosyl-L-methionine is bound by residues 39–41, Asp57, Phe84, Asp101, and Gln108; that span reads GGY.

It belongs to the methyltransferase superfamily. RsmH family.

The protein localises to the cytoplasm. The enzyme catalyses cytidine(1402) in 16S rRNA + S-adenosyl-L-methionine = N(4)-methylcytidine(1402) in 16S rRNA + S-adenosyl-L-homocysteine + H(+). Its function is as follows. Specifically methylates the N4 position of cytidine in position 1402 (C1402) of 16S rRNA. This chain is Ribosomal RNA small subunit methyltransferase H, found in Dinoroseobacter shibae (strain DSM 16493 / NCIMB 14021 / DFL 12).